Consider the following 88-residue polypeptide: MLVTEKKQEIVNAHKLHDSDTGSPEVQIALLSERITYLTEHFKTHKKDHHSRRGLLKIVGQRRGLLDYLKKKDVERYKSIIAKLGIRR.

The protein belongs to the universal ribosomal protein uS15 family. Part of the 30S ribosomal subunit. Forms a bridge to the 50S subunit in the 70S ribosome, contacting the 23S rRNA.

In terms of biological role, one of the primary rRNA binding proteins, it binds directly to 16S rRNA where it helps nucleate assembly of the platform of the 30S subunit by binding and bridging several RNA helices of the 16S rRNA. Its function is as follows. Forms an intersubunit bridge (bridge B4) with the 23S rRNA of the 50S subunit in the ribosome. The sequence is that of Small ribosomal subunit protein uS15 from Geobacter sp. (strain M21).